The sequence spans 342 residues: tRNA-specific 2-thiouridylase MnmA (342 aa).

ATP contacts are provided by residues 6–13 (LLSGGVDS) and Leu-32. Cys-92 (nucleophile) is an active-site residue. An intrachain disulfide couples Cys-92 to Cys-191. Gly-116 contacts ATP. The tract at residues 138–140 (KDQ) is interaction with tRNA. Cys-191 functions as the Cysteine persulfide intermediate in the catalytic mechanism. Positions 293–294 (RY) are interaction with tRNA.

It belongs to the MnmA/TRMU family.

The protein resides in the cytoplasm. It carries out the reaction S-sulfanyl-L-cysteinyl-[protein] + uridine(34) in tRNA + AH2 + ATP = 2-thiouridine(34) in tRNA + L-cysteinyl-[protein] + A + AMP + diphosphate + H(+). In terms of biological role, catalyzes the 2-thiolation of uridine at the wobble position (U34) of tRNA, leading to the formation of s(2)U34. The polypeptide is tRNA-specific 2-thiouridylase MnmA (Helicobacter pylori (strain G27)).